Reading from the N-terminus, the 299-residue chain is Taste receptor type 2 member 42 (299 aa).

Over Met-1 to Lys-7 the chain is Extracellular. Residues Ile-8–Gly-28 form a helical membrane-spanning segment. Residues Leu-29–Ser-50 are Cytoplasmic-facing. Residues Leu-51–Leu-71 form a helical membrane-spanning segment. Residues Ala-72–Thr-101 lie on the Extracellular side of the membrane. Residues Cys-102–Leu-122 traverse the membrane as a helical segment. Residues Arg-123–Asn-127 lie on the Cytoplasmic side of the membrane. The chain crosses the membrane as a helical span at residues Gly-128–Leu-148. Residues Glu-149–Leu-187 are Extracellular-facing. Residues Thr-188–Val-208 form a helical membrane-spanning segment. At Arg-209–Ser-238 the chain is on the cytoplasmic side. Residues Phe-239–Met-259 form a helical membrane-spanning segment. At Leu-260–Tyr-265 the chain is on the extracellular side. The helical transmembrane segment at Ile-266–Leu-286 threads the bilayer. The Cytoplasmic portion of the chain corresponds to Gly-287–Leu-299.

It belongs to the G-protein coupled receptor T2R family.

It is found in the membrane. In terms of biological role, receptor that may play a role in the perception of bitterness and is gustducin-linked. May play a role in sensing the chemical composition of the gastrointestinal content. The activity of this receptor may stimulate alpha gustducin, mediate PLC-beta-2 activation and lead to the gating of TRPM5. In Gorilla gorilla gorilla (Western lowland gorilla), this protein is Taste receptor type 2 member 42 (TAS2R42).